A 214-amino-acid chain; its full sequence is DELTA-actitoxin-Aeq1b (214 aa).

An N-terminal signal peptide occupies residues 1 to 19 (MSRLIIVFIVVTMICAATA). The propeptide occupies 20 to 35 (LSSKKSINEDEKDEKR). The interval 38-47 (AVAGAVIEGA) is plays an important role in the hemolytic activity. Residues 46–65 (GATLTFNVLQTVLKALGDIS) form an N-terminal region region. 7 residues coordinate phosphocholine: Ser89, Val122, Ser140, Pro142, Tyr168, Tyr172, and Tyr173. Positions 140–155 (SIPFDYNLYSNWWNVK) are trp-rich region, which is important for the binding to lipid membrane. The Cell attachment site, crucial for protein stability motif lies at 179 to 181 (RGD).

Belongs to the actinoporin family. Sea anemone subfamily. As to quaternary structure, octamer or nonamer in membranes. Monomer in the soluble state.

Its subcellular location is the secreted. It is found in the nematocyst. It localises to the target cell membrane. Functionally, pore-forming protein that forms cations-selective hydrophilic pores of around 1 nm and causes cytolysis. Pore formation is a multi-step process that involves specific recognition of membrane sphingomyelin (but neither cholesterol nor phosphatidylcholine) using aromatic rich region and adjacent phosphocholine (POC) binding site, firm binding to the membrane (mainly driven by hydrophobic interactions) accompanied by the transfer of the N-terminal region to the lipid-water interface and finally pore formation after oligomerization of monomers. The protein is DELTA-actitoxin-Aeq1b of Actinia equina (Beadlet anemone).